Reading from the N-terminus, the 250-residue chain is Probable transcriptional regulatory protein RC1_1808 (250 aa).

The interval 1 to 21 is disordered; it reads MAGHSQFKNIMHRKGAQDAKR.

It belongs to the TACO1 family.

The protein localises to the cytoplasm. This Rhodospirillum centenum (strain ATCC 51521 / SW) protein is Probable transcriptional regulatory protein RC1_1808.